Consider the following 497-residue polypeptide: Carboxylesterase (497 aa).

Ser-185 serves as the catalytic Acyl-ester intermediate. Active-site charge relay system residues include Glu-319 and His-415.

The protein belongs to the type-B carboxylesterase/lipase family.

The protein localises to the secreted. It catalyses the reaction a carboxylic ester + H2O = an alcohol + a carboxylate + H(+). The polypeptide is Carboxylesterase (Thermobifida fusca (strain YX)).